Consider the following 370-residue polypeptide: Pyrimidine monooxygenase RutA (370 aa).

Residues 49 to 50 (IK), N115, E124, 140 to 141 (RY), and S190 each bind FMN.

This sequence belongs to the NtaA/SnaA/DszA monooxygenase family. RutA subfamily.

The enzyme catalyses uracil + FMNH2 + NADH + O2 = (Z)-3-ureidoacrylate + FMN + NAD(+) + H2O + H(+). It carries out the reaction thymine + FMNH2 + NADH + O2 = (Z)-2-methylureidoacrylate + FMN + NAD(+) + H2O + H(+). Catalyzes the pyrimidine ring opening between N-3 and C-4 by an unusual flavin hydroperoxide-catalyzed mechanism, adding oxygen atoms in the process to yield ureidoacrylate peracid, that immediately reacts with FMN forming ureidoacrylate and FMN-N(5)-oxide. The FMN-N(5)-oxide reacts spontaneously with NADH to produce FMN. Requires the flavin reductase RutF to regenerate FMN in vivo. This is Pyrimidine monooxygenase RutA from Variovorax paradoxus (strain S110).